A 459-amino-acid chain; its full sequence is Cytosolic carboxypeptidase 6 (459 aa).

The Peptidase M14 domain maps to 142–418; the sequence is IPYTYGQMQI…AFCRALLNFY (277 aa). The Zn(2+) site is built by H204, E207, and H302. The active-site Proton donor/acceptor is the E376.

It belongs to the peptidase M14 family. Zn(2+) serves as cofactor. In terms of tissue distribution, expressed in labial and amphid neurons.

The protein localises to the cytoplasm. The enzyme catalyses (L-glutamyl)(n+1)-gamma-L-glutamyl-L-glutamyl-[protein] + H2O = (L-glutamyl)(n)-gamma-L-glutamyl-L-glutamyl-[protein] + L-glutamate. Functionally, metallocarboxypeptidase that catalyzes the removing of polyglutamate side chains that are present on the gamma-carboxyl group of glutamate residues of tubulin in sensory cilia. Probably via the deglutamylation of tubulin, promotes microtubule stability required for axon regrowth after injury. Also regulates microtubule dynamics in uterine muscle cells. The protein is Cytosolic carboxypeptidase 6 of Caenorhabditis elegans.